A 296-amino-acid polypeptide reads, in one-letter code: tRNA dimethylallyltransferase (296 aa).

Gly-11–Thr-18 contacts ATP. Thr-13–Thr-18 contacts substrate. The interaction with substrate tRNA stretch occupies residues Asp-36 to Gln-39.

This sequence belongs to the IPP transferase family. In terms of assembly, monomer. It depends on Mg(2+) as a cofactor.

It catalyses the reaction adenosine(37) in tRNA + dimethylallyl diphosphate = N(6)-dimethylallyladenosine(37) in tRNA + diphosphate. Its function is as follows. Catalyzes the transfer of a dimethylallyl group onto the adenine at position 37 in tRNAs that read codons beginning with uridine, leading to the formation of N6-(dimethylallyl)adenosine (i(6)A). The chain is tRNA dimethylallyltransferase from Streptococcus agalactiae serotype III (strain NEM316).